The chain runs to 320 residues: Acetyl-coenzyme A carboxylase carboxyl transferase subunit alpha (320 aa).

Residues 34-288 (RLEEALEAAR…GEALERVLAG (255 aa)) enclose the CoA carboxyltransferase C-terminal domain.

Belongs to the AccA family. As to quaternary structure, acetyl-CoA carboxylase is a heterohexamer composed of biotin carboxyl carrier protein (AccB), biotin carboxylase (AccC) and two subunits each of ACCase subunit alpha (AccA) and ACCase subunit beta (AccD).

The protein resides in the cytoplasm. The catalysed reaction is N(6)-carboxybiotinyl-L-lysyl-[protein] + acetyl-CoA = N(6)-biotinyl-L-lysyl-[protein] + malonyl-CoA. It participates in lipid metabolism; malonyl-CoA biosynthesis; malonyl-CoA from acetyl-CoA: step 1/1. In terms of biological role, component of the acetyl coenzyme A carboxylase (ACC) complex. First, biotin carboxylase catalyzes the carboxylation of biotin on its carrier protein (BCCP) and then the CO(2) group is transferred by the carboxyltransferase to acetyl-CoA to form malonyl-CoA. In Rubrobacter xylanophilus (strain DSM 9941 / JCM 11954 / NBRC 16129 / PRD-1), this protein is Acetyl-coenzyme A carboxylase carboxyl transferase subunit alpha.